A 127-amino-acid chain; its full sequence is Protein ApaG (127 aa).

Residues 3-127 (DQPPTEIQIS…FRLAAATVFH (125 aa)) form the ApaG domain.

This Acidithiobacillus ferrooxidans (strain ATCC 23270 / DSM 14882 / CIP 104768 / NCIMB 8455) (Ferrobacillus ferrooxidans (strain ATCC 23270)) protein is Protein ApaG.